Consider the following 136-residue polypeptide: Congerin-2 (136 aa).

S2 carries the N-acetylserine modification. The 133-residue stretch at R4–E136 folds into the Galectin domain. W70–S76 is a binding site for a beta-D-galactoside.

As to quaternary structure, homodimer.

In terms of biological role, this protein binds beta-galactoside. Its physiological function is not yet known. The chain is Congerin-2 from Conger myriaster (Conger eel).